An 80-amino-acid polypeptide reads, in one-letter code: MKVSCEDINGPRSSLSRAWNHMSWLYYQYLLVTALYMLEPWERTIFNSMLVSIVGMALYTGYIFMPQHILAILHYFEIVQ.

The Cytoplasmic segment spans residues 1–21; it reads MKVSCEDINGPRSSLSRAWNH. Residues 22 to 38 traverse the membrane as a helical segment; that stretch reads MSWLYYQYLLVTALYML. Residues 39–43 are Lumenal-facing; the sequence is EPWER. A helical transmembrane segment spans residues 44 to 66; the sequence is TIFNSMLVSIVGMALYTGYIFMP. Residues 67–80 are Cytoplasmic-facing; the sequence is QHILAILHYFEIVQ.

The protein belongs to the SPTSS family. SPTSSA subfamily. In terms of assembly, component of the serine palmitoyltransferase (SPT) complex, which is composed of SPTLC1, SPTLC2 or SPTLC3 and SPTSSA or SPTSSB. The heterodimer consisting of SPTLC1 and SPTLC2/SPTLC3 forms the catalytic core of the enzyme, while SPTSSA or SPTSSB subunits determine substrate specificity. SPT also interacts with ORMDL proteins, especially ORMDL3, which negatively regulate SPT activity in the presence of ceramides.

It is found in the endoplasmic reticulum membrane. The protein operates within lipid metabolism; sphingolipid metabolism. Its function is as follows. Component of the serine palmitoyltransferase multisubunit enzyme (SPT) that catalyzes the initial and rate-limiting step in sphingolipid biosynthesis by condensing L-serine and activated acyl-CoA (most commonly palmitoyl-CoA) to form long-chain bases. The SPT complex is composed of SPTLC1, SPTLC2 or SPTLC3 and SPTSSA or SPTSSB. Within this complex, the heterodimer consisting of SPTLC1 and SPTLC2/SPTLC3 forms the catalytic core. Within the SPT complex, SPTSSA stimulates the catalytic activity and plays a role in substrate specificity, which depends upon the overall complex composition. The SPTLC1-SPTLC2-SPTSSA complex shows a strong preference for C16-CoA substrate, while the SPTLC1-SPTLC3-SPTSSA isozyme uses both C14-CoA and C16-CoA as substrates, with a slight preference for C14-CoA. Independently of its action as a SPT component, may be involved in MBOAT7 localization to mitochondria-associated membranes, a membrane bridge between the endoplasmic reticulum and mitochondria, may hence affect MBOAT7-catalyzed incorporation of arachidonic acid into phosphatidylinositol. The polypeptide is Serine palmitoyltransferase small subunit A (sptssa) (Xenopus tropicalis (Western clawed frog)).